We begin with the raw amino-acid sequence, 1143 residues long: AP-3 complex subunit delta (1143 aa).

HEAT repeat units follow at residues 129–166 (DLARELANDILTLLSTQKTHILKRAITVLYKIFLRYPE), 167–203 (SLRPAFPKLREKLDDPEPSVVSCSVNVICELARRNPK), 205–242 (YLPLAPVLFRILTNTTNNYWMLIKIVKLFAALTPHEPR), 245–279 (KKLIDPLTNIINSSPSVSLLYECIQTCITGMSDHI), 280–317 (PLMKLCISKLRTLIEHNDQNLKYLGLLALNNIMKIHPK), 318–354 (AVSEHRDLVLNCLEDDDISIRLRALDLLPGMTSKKNI), 356–389 (DIVFKLLDHLDNAEGQYKEQIIEKIIELCSMGTY), and 416–455 (LIASQLLDVVIRVKIVRAYSTRQMIELLKNPKLMSNPTEG). Disordered stretches follow at residues 520–541 (KIPSLDDDDEEEEAQEEEDQNE), 634–692 (QEPI…RHPI), 704–728 (KQANNPYMLGGKVSKKLSTNDPENI), 741–792 (HVGA…NDAL), and 829–899 (KKNA…QAAA). Acidic residues predominate over residues 524 to 540 (LDDDDEEEEAQEEEDQN). Positions 526–550 (DDDEEEEAQEEEDQNEITHEIVQEC) form a coiled coil. Basic residues predominate over residues 653–662 (HQKKHHKHHR). Positions 666–675 (DGDDDEDDET) are enriched in acidic residues. Residues 814 to 835 (TDIIKEKEREMAMLAKKNAKLS) adopt a coiled-coil conformation. Residues 840 to 849 (PSTANYSEVT) show a composition bias toward polar residues. Low complexity-rich tracts occupy residues 854–867 (APAKKATKKAAAGS) and 881–899 (KPAATSSTTTTTKSTQAAA). The 103-residue stretch at 914-1016 (KTILDDDNFK…FTLLASPSSS (103 aa)) folds into the GAE domain.

The protein belongs to the adaptor complexes large subunit family. As to quaternary structure, adaptor protein complex 3 (AP-3) is a heterotetramer composed of two large adaptins (delta-type subunit and beta-type subunit), a medium adaptin (mu-type subunit) and a small adaptin (sigma-type subunit).

Its subcellular location is the endosome membrane. In terms of biological role, part of the AP-3 complex, an adaptor-related complex which is essential for the compartmentalization of the endocytic pathway. In Dictyostelium discoideum (Social amoeba), this protein is AP-3 complex subunit delta (ap3d1).